Consider the following 404-residue polypeptide: RING-H2 finger protein ATL11 (404 aa).

Positions 1–36 (MNPKGRTNLNRSIIGGHDHGSILQLLLFLLLLSSHG) are cleaved as a signal peptide. A helical transmembrane segment spans residues 64–84 (AILMIVLVSVFFFLGFFSVYI). The RING-type; atypical zinc-finger motif lies at 144-186 (CSVCLNEFEDDETLRLIPKCCHVFHPGCIDAWLRSHTTCPLCR). Disordered regions lie at residues 339–361 (PYRTSSINHMSPGGSGGDKVRAS) and 385–404 (VGENSSDHLRSCDATPSNTV).

This sequence belongs to the RING-type zinc finger family. ATL subfamily.

The protein resides in the membrane. The enzyme catalyses S-ubiquitinyl-[E2 ubiquitin-conjugating enzyme]-L-cysteine + [acceptor protein]-L-lysine = [E2 ubiquitin-conjugating enzyme]-L-cysteine + N(6)-ubiquitinyl-[acceptor protein]-L-lysine.. The protein operates within protein modification; protein ubiquitination. The polypeptide is RING-H2 finger protein ATL11 (ATL11) (Arabidopsis thaliana (Mouse-ear cress)).